We begin with the raw amino-acid sequence, 505 residues long: Glutamate--tRNA ligase (505 aa).

Residues 12–22 (PSPTGALHIGG) carry the 'HIGH' region motif. The 'KMSKS' region motif lies at 260–264 (KLSKR). An ATP-binding site is contributed by Lys-263.

The protein belongs to the class-I aminoacyl-tRNA synthetase family. Glutamate--tRNA ligase type 1 subfamily. In terms of assembly, monomer.

The protein resides in the cytoplasm. It catalyses the reaction tRNA(Glu) + L-glutamate + ATP = L-glutamyl-tRNA(Glu) + AMP + diphosphate. In terms of biological role, catalyzes the attachment of glutamate to tRNA(Glu) in a two-step reaction: glutamate is first activated by ATP to form Glu-AMP and then transferred to the acceptor end of tRNA(Glu). This Phocaeicola vulgatus (strain ATCC 8482 / DSM 1447 / JCM 5826 / CCUG 4940 / NBRC 14291 / NCTC 11154) (Bacteroides vulgatus) protein is Glutamate--tRNA ligase.